The sequence spans 246 residues: 3'(2'),5'-bisphosphate nucleotidase CysQ (246 aa).

Residues Glu64, Asp83, Leu85, Asp86, and Asp205 each contribute to the Mg(2+) site. Glu64 is a binding site for substrate. Residues 85-88 (LDGT) and Asp205 each bind substrate.

It belongs to the inositol monophosphatase superfamily. CysQ family. Mg(2+) serves as cofactor.

It is found in the cell inner membrane. The enzyme catalyses adenosine 3',5'-bisphosphate + H2O = AMP + phosphate. With respect to regulation, inhibited by lithium and calcium. Its function is as follows. Converts adenosine-3',5'-bisphosphate (PAP) to AMP. May also convert adenosine 3'-phosphate 5'-phosphosulfate (PAPS) to adenosine 5'-phosphosulfate (APS). Has 10000-fold lower activity towards inositol 1,4-bisphosphate (Ins(1,4)P2). This is 3'(2'),5'-bisphosphate nucleotidase CysQ from Escherichia coli (strain K12).